The chain runs to 1130 residues: Putative beta-hexosaminidase (1130 aa).

The first 23 residues, 1 to 23 (MKWVKSGVGILGILLIICHAVTS), serve as a signal peptide directing secretion. 2 stretches are compositionally biased toward low complexity: residues 1001-1030 (PGQM…LPAQ) and 1037-1072 (LTGQ…QRTG). 2 disordered regions span residues 1001 to 1075 (PGQM…GVVP) and 1102 to 1130 (QMRG…QQAG).

It belongs to the glycosyl hydrolase 20 family. Prismatic layer of shell (at protein level). Expressed primarily in the mantle with highest level in the mantle edge and lower level in the mantle pallium.

The protein resides in the secreted. It catalyses the reaction Hydrolysis of terminal non-reducing N-acetyl-D-hexosamine residues in N-acetyl-beta-D-hexosaminides.. The protein operates within glycan degradation; chitin degradation. This is Putative beta-hexosaminidase from Pinctada maxima (Silver-lipped pearl oyster).